The primary structure comprises 290 residues: Syntaxin-1A (290 aa).

The disordered stretch occupies residues Met-1 to Glu-21. The Cytoplasmic portion of the chain corresponds to Met-1 to Lys-267. One can recognise a t-SNARE coiled-coil homology domain in the interval Leu-194–Ala-256. The helical; Anchor for type IV membrane protein transmembrane segment at Ile-268–Leu-289 threads the bilayer. Thr-290 is a topological domain (vesicular).

The protein belongs to the syntaxin family. Post-translationally, (Microbial infection) Targeted and hydrolyzed by the light chain (LC) of P.bifermentans PMP1. Cleavage probably inhibits neurotransmitter release.

Its subcellular location is the cytoplasmic vesicle. The protein localises to the secretory vesicle. It is found in the synaptic vesicle membrane. Its function is as follows. Plays a critical role in several secretory processes. This chain is Syntaxin-1A, found in Anopheles gambiae (African malaria mosquito).